The chain runs to 287 residues: MTFSQMILNLQNYWQEQGCAIMQPYDMPAGAGTFHPATFLRSLGKKPWAAAYVAPSRRPTDGRYGENPNRLGAYYQFQVLIKPSPDNIQELYLKSLENLGFDLKSHDIRFVEDNWESPSLGAWGLGWEVWLDGMEVTQFTYFQQVGGIAVDLVSAEITYGLERIAMYLQNVDNVYDIVWSEFNGEKIKYADVHKQSEYEFSKYNFEVSDVKILNEQFENSYKECKNILEQGLALPAYDYCMLAAHTFNLLDARGAISVAQRQDYMLKIRELSKNCAEIYKKNLNEAE.

This sequence belongs to the class-II aminoacyl-tRNA synthetase family. Tetramer of two alpha and two beta subunits.

The protein resides in the cytoplasm. It carries out the reaction tRNA(Gly) + glycine + ATP = glycyl-tRNA(Gly) + AMP + diphosphate. This Campylobacter jejuni subsp. jejuni serotype O:23/36 (strain 81-176) protein is Glycine--tRNA ligase alpha subunit.